The primary structure comprises 244 residues: 1-(5-phosphoribosyl)-5-[(5-phosphoribosylamino)methylideneamino] imidazole-4-carboxamide isomerase (244 aa).

The active-site Proton acceptor is the aspartate 9. Aspartate 131 (proton donor) is an active-site residue.

The protein belongs to the HisA/HisF family.

Its subcellular location is the cytoplasm. It carries out the reaction 1-(5-phospho-beta-D-ribosyl)-5-[(5-phospho-beta-D-ribosylamino)methylideneamino]imidazole-4-carboxamide = 5-[(5-phospho-1-deoxy-D-ribulos-1-ylimino)methylamino]-1-(5-phospho-beta-D-ribosyl)imidazole-4-carboxamide. The protein operates within amino-acid biosynthesis; L-histidine biosynthesis; L-histidine from 5-phospho-alpha-D-ribose 1-diphosphate: step 4/9. The chain is 1-(5-phosphoribosyl)-5-[(5-phosphoribosylamino)methylideneamino] imidazole-4-carboxamide isomerase from Campylobacter jejuni subsp. jejuni serotype O:6 (strain 81116 / NCTC 11828).